Here is a 63-residue protein sequence, read N- to C-terminus: Gallinacin-4 (63 aa).

Residues 1–19 (MKILCFFIVLLFVAVHGAV) form the signal peptide. Residues 20-25 (GFSRSP) constitute a propeptide that is removed on maturation. Intrachain disulfides connect cysteine 31/cysteine 59, cysteine 38/cysteine 53, and cysteine 43/cysteine 60.

It belongs to the beta-defensin family. Strong expression in the bone marrow and testis. Widely expressed. Weak expression in the ovarian stroma, but not expressed in the ovarian follicles.

The protein localises to the secreted. It is found in the cytoplasmic granule. Functionally, has bactericidal activity. Potent activity against S.typhimurium and S.entiriditis. This Gallus gallus (Chicken) protein is Gallinacin-4 (GAL4).